Reading from the N-terminus, the 1720-residue chain is MKIIFFLCSFLFFIINTQCVTHESYQELVKKLEALEDAVLTGYSLFQKEKMVLNEEEITTKGASAQSGASAQSGASAQSGASAQSGASAQSGASAQSGTSGPSGPSGTSPSSRSNTLPRSNTSSGASPPADASDSDAKSYADLKHRVRNYLFTIKELKYPELFDLTNHMLTLCDNIHGFKYLIDGYEEINELLYKLNFYFDLLRAKLNDVCANDYCQIPFNLKIRANELDVLKKLVFGYRKPLDNIKDNVGKMEDYIKKNKTTIANINELIEGSKKTIDQNKNADNEEGKKKLYQAQYDLSIYNKQLEEAHNLISVLEKRIDTLKKNENIKKLLDKINEIKNPPPANSGNTPNTLLDKNKKIEEHEEKIKEIAKTIKFNIDSLFTDPLELEYYLREKNKKVDVTPKSQDPTKSVQIPKVPYPNGIVYPLPLTDIHNSLAADNDKNSYGDLMNPHTKEKINEKIITDNKERKIFINNIKKKIDLEEKNINHTKEQNKKLLEDYEKSKKDYEELLEKFYEMKFNNNFNKDVVDKIFSARYTYNVEKQRYNNKFSSSNNSVYNVQKLKKALSYLEDYSLRKGISEKDFNHYYTLKTGLEADIKKLTEEIKSSENKILEKNFKGLTHSANGSLEVSDIVKLQVQKVLLIKKIEDLRKIELFLKNAQLKDSIHVPNIYKPQNKPEPYYLIVLKKEVDKLKEFIPKVKDMLKKEQAVLSSITQPLVAASETTEDGGHSTHTLSQSGETEVTEETEETEETVGHTTTVTITLPPTQPSPPKEVKVVENSIEHKSNDNSQALTKTVYLKKLDEFLTKSYICHKYILVSNSSMDQKLLEVYNLTPEEENELKSCDPLDLLFNIQNNIPAMYSLYDSMNNDLQHLFFELYQKEMIYYLHKLKEENHIKKLLEEQKQITGTSSTSSPGNTTVNTAQSATHSNSQNQQSNASSTNTQNGVAVSSGPAVVEESHDPLTVLSISNDLKGIVSLLNLGNKTKVPNPLTISTTEMEKFYENILKNNDTYFNDDIKQFVKSNSKVITGLTETQKNALNDEIKKLKDTLQLSFDLYNKYKLKLDRLFNKKKELGQDKMQIKKLTLLKEQLESKLNSLNNPHNVLQNFSVFFNKKKEAEIAETENTLENTKILLKHYKGLVKYYNGESSPLKTLSEVSIQTEDNYANLEKFRVLSKIDGKLNDNLHLGKKKLSFLSSGLHHLITELKEVIKNKNYTGNSPSENNKKVNEALKSYENFLPEAKVTTVVTPPQPDVTPSPLSVRVSGSSGSTKEETQIPTSGSLLTELQQVVQLQNYDEEDDSLVVLPIFGESEDNDEYLDQVVTGEAISVTMDNILSGFENEYDVIYLKPLAGVYRSLKKQIEKNIFTFNLNLNDILNSRLKKRKYFLDVLESDLMQFKHISSNEYIIEDSFKLLNSEQKNTLLKSYKYIKESVENDIKFAQEGISYYEKVLAKYKDDLESIKKVIKEEKEKFPSSPPTTPPSPAKTDEQKKESKFLPFLTNIETLYNNLVNKIDDYLINLKAKINDCNVEKDEAHVKITKLSDLKAIDDKIDLFKNPYDFEAIKKLINDDTKKDMLGKLLSTGLVQNFPNTIISKLIEGKFQDMLNISQHQCVKKQCPENSGCFRHLDEREECKCLLNYKQEGDKCVENPNPTCNENNGGCDADATCTEEDSGSSRKKITCECTKPDSYPLFDGIFCSSSNFLGISFLLILMLILYSFI.

An N-terminal signal peptide occupies residues 1-19 (MKIIFFLCSFLFFIINTQC). Positions 63–112 (ASAQSGASAQSGASAQSGASAQSGASAQSGASAQSGTSGPSGPSGTSPSS) are enriched in low complexity. A disordered region spans residues 63 to 137 (ASAQSGASAQ…PPADASDSDA (75 aa)). Positions 113–122 (RSNTLPRSNT) are enriched in polar residues. A compositionally biased stretch (low complexity) spans 123–132 (SSGASPPADA). The stretch at 474-519 (INNIKKKIDLEEKNINHTKEQNKKLLEDYEKSKKDYEELLEKFYEM) forms a coiled coil. Disordered regions lie at residues 723-775 (SETT…PPKE), 908-955 (TGTS…SGPA), 1249-1278 (TPPQ…TQIP), and 1470-1491 (KEKF…DEQK). Over residues 743–753 (EVTEETEETEE) the composition is skewed to acidic residues. The span at 908-946 (TGTSSTSSPGNTTVNTAQSATHSNSQNQQSNASSTNTQN) shows a compositional bias: low complexity. The segment covering 1264-1278 (VSGSSGSTKEETQIP) has biased composition (polar residues). The segment covering 1475–1484 (SSPPTTPPSP) has biased composition (pro residues). 2 EGF-like domains span residues 1611-1651 (HQCV…VENP) and 1652-1693 (NPTC…YPLF). Disulfide bonds link cysteine 1613–cysteine 1624, cysteine 1618–cysteine 1634, cysteine 1636–cysteine 1647, cysteine 1655–cysteine 1668, cysteine 1662–cysteine 1682, and cysteine 1684–cysteine 1698. Residue serine 1699 is the site of GPI-anchor amidated serine attachment. A propeptide spans 1700–1720 (SSNFLGISFLLILMLILYSFI) (removed in mature form).

As to quaternary structure, forms a complex composed of subunits p83, p30, p38, and p42 which remain non-covalently associated; the complex is formed at the merozoite surface prior to egress from host erythrocytes. Forms a complex composed of processed MSP1 subunits, MSP6 subunit p36 and MSP7; the complex is formed at the merozoite surface prior to egress from host erythrocytes. Within the complex, interacts (via subunit p38) with MSP6 subunit p36 and (via subunits p83, p30 and p38) with MSP7 (via subunit p22). Forms a complex composed of MSP1, MSP6, DBLMSP1 and DBLMSP2. Within the complex, interacts (via subunit p38) with DBLMSP1 and DBLMSP2. Forms a complex composed of MSP1, and rhoptry proteins RhopH3, RAP1 and CLAG9/RhopH3. Within the complex, interacts (via subunits p42 and p19) with RhopH3 (via C-terminus). Forms a complex composed of MSP1, MSP6, MSP7, MSP9 and MSP3; within the complex, MSP6 and MSP9 mediate the binding to the host erythrocyte. Interacts (via subunits p19 and p42) with MSP9; the interaction is direct; MSP1 subunits p19 or p42, and MSP9 form a co-ligand complex that interacts with host SLC4A1/Band 3 protein. May interact with PFD6. Interacts with host spectrin. Interacts with host glycophorin GYPA in a sialic acid-independent manner. In terms of assembly, interacts with host proinflammatory cytokine S100P; the interaction blocks S100P inflammatory and chemotactic activities. As to quaternary structure, interacts with host SLC4A1/Band 3 (via 5ABC region) on the host erythrocyte surface in a sialic acid-independent manner. Post-translationally, the p190 precursor is cleaved by SUB1 prior to merozoite egress into 4 subunits p83, p30, p38, and p42 which remain non-covalently associated. SUB1-mediated proteolytic cleavage occurs in an orderly manner; the first cleavage occurs at the p30/p38 site, followed by cleavage at the p83/p30 site, in the 3D7 strain a second cleavage occurs at the N-terminus of p83, the last cleavage occurs at the p38/p42 site. The order of cleavage is essential for parasite viability. SUB1-mediated processing is essential for merozoite egress. In a second processing step during erythrocyte invasion, p42 is cleaved by SUB2 into p33 and p19; the latter remains attached to the merozoite surface via its GPI-anchor and is endocytosed during the subsequent ring stage.

Its subcellular location is the cell membrane. It is found in the secreted. The protein localises to the vacuole membrane. In terms of biological role, during the asexual blood stage, involved in merozoite egress from host erythrocytes possibly via its interaction with the host cytoskeleton protein spectrin resulting in the destabilization of the host cytoskeleton and thus leading to erythrocyte cell membrane rupture. Involved in the binding to host erythrocytes and is required for host erythrocyte invasion. Functionally, by binding to host proinflammatory cytokine S100P may interfere with host immune responses. Involved in merozoite invasion of host erythrocytes. May play a role in the biogenesis and/or function of the food vacuole during the intraerythrocytic development. The sequence is that of Merozoite surface protein 1 from Plasmodium falciparum (isolate 3D7).